The following is a 273-amino-acid chain: DNA repair protein RecO (273 aa).

A disordered region spans residues 249 to 273 (GRSLTEEPELKAEQTEAEKESQRPR). Residues 252 to 273 (LTEEPELKAEQTEAEKESQRPR) show a composition bias toward basic and acidic residues.

The protein belongs to the RecO family.

In terms of biological role, involved in DNA repair and RecF pathway recombination. The chain is DNA repair protein RecO from Heliobacterium modesticaldum (strain ATCC 51547 / Ice1).